The primary structure comprises 514 residues: Protein translocase subunit SecD (514 aa).

5 consecutive transmembrane segments (helical) span residues 7–27 (WKIF…LPNF), 357–377 (IIGF…LGLF), 389–409 (VLAL…AGII), 448–470 (FATI…IFGV), and 482–502 (IGII…IDIW).

It belongs to the SecD/SecF family. SecD subfamily. Forms a complex with SecF. Part of the essential Sec protein translocation apparatus which comprises SecA, SecYEG and auxiliary proteins SecDF-YajC and YidC.

The protein localises to the cell inner membrane. In terms of biological role, part of the Sec protein translocase complex. Interacts with the SecYEG preprotein conducting channel. SecDF uses the proton motive force (PMF) to complete protein translocation after the ATP-dependent function of SecA. The protein is Protein translocase subunit SecD of Rickettsia bellii (strain RML369-C).